A 559-amino-acid chain; its full sequence is 2,3-bisphosphoglycerate-independent phosphoglycerate mutase (559 aa).

Residues Asp28 and Ser81 each coordinate Mn(2+). The active-site Phosphoserine intermediate is Ser81. Substrate is bound by residues His140, 170–171 (RD), Arg206, Arg213, 286–289 (RADR), and Lys361. Residues Asp430, His434, Asp471, His472, and His501 each contribute to the Mn(2+) site.

This sequence belongs to the BPG-independent phosphoglycerate mutase family. Monomer. Mn(2+) serves as cofactor.

The protein resides in the cytoplasm. It carries out the reaction (2R)-2-phosphoglycerate = (2R)-3-phosphoglycerate. Its pathway is carbohydrate degradation; glycolysis; pyruvate from D-glyceraldehyde 3-phosphate: step 3/5. Catalyzes the interconversion of 2-phosphoglycerate and 3-phosphoglycerate. The chain is 2,3-bisphosphoglycerate-independent phosphoglycerate mutase (PGM1) from Mesembryanthemum crystallinum (Common ice plant).